Here is a 426-residue protein sequence, read N- to C-terminus: Serine protease HTRA2, mitochondrial (426 aa).

The N-terminal 30 residues, 1-30 (MALRGSHRLDDFIRRCSALTLFHSQAPSRR), are a transit peptide targeting the mitochondrion. Residues 30–59 (RVSHCGRDRRQQQDPPGQGRQEQQESGGGH) form a disordered region. A propeptide spanning residues 31-78 (VSHCGRDRRQQQDPPGQGRQEQQESGGGHWSRFGWRSLIRFFVPFSLG) is cleaved from the precursor. A compositionally biased stretch (low complexity) spans 42-54 (QDPPGQGRQEQQE). The helical transmembrane segment at 68–86 (LIRFFVPFSLGAVASSLVI) threads the bilayer. Residues 79–82 (AVAS) carry the IAP-binding motif. Residues 143 to 306 (SNGSGFIIEQ…IPIDYVKVFL (164 aa)) form a serine protease region. Active-site charge relay system residues include His161, Asp193, and Ser270. The PDZ domain maps to 329 to 414 (MGITMLTLTP…HLDIVILRGV (86 aa)).

It belongs to the peptidase S1C family. Interacts with th/DIAP1 (via BIR 2 domain).

The protein localises to the mitochondrion intermembrane space. It localises to the mitochondrion membrane. It carries out the reaction Cleavage of non-polar aliphatic amino-acids at the P1 position, with a preference for Val, Ile and Met. At the P2 and P3 positions, Arg is selected most strongly with a secondary preference for other hydrophilic residues.. Functionally, serine protease that shows proteolytic activity against a non-specific substrate beta-casein. Promotes or induces cell death either by direct binding to and inhibition of BIRC proteins (also called inhibitor of apoptosis proteins, IAPs), leading to an increase in caspase activity, or by a BIRC inhibition-independent, caspase-independent and serine protease activity-dependent mechanism. Can antagonize antiapoptotic activity of th/Diap1 by directly inducing the degradation of th/Diap1. The protein is Serine protease HTRA2, mitochondrial of Drosophila ananassae (Fruit fly).